Reading from the N-terminus, the 557-residue chain is Resveratrol cleavage oxygenase 1 (557 aa).

Residues 1–46 (MAILNDPPSSTTILSLHTPDVPPPSKPTPATTSHPQDSRNPRNLTS) are disordered. Residues Tyr-144 and Lys-177 each coordinate piceatannol. Positions 144 and 177 each coordinate trans-resveratrol. 3 residues coordinate Fe cation: His-211, His-262, and His-334. Residue Glu-404 coordinates piceatannol. Trans-resveratrol is bound at residue Glu-404. Residue His-523 participates in Fe cation binding.

It belongs to the carotenoid oxygenase family. The cofactor is Fe(2+).

It carries out the reaction trans-resveratrol + O2 = 3,5-dihydroxybenzaldehyde + 4-hydroxybenzaldehyde. The enzyme catalyses piceatannol + O2 = 3,5-dihydroxybenzaldehyde + 3,4-dihydroxybenzaldehyde. Its function is as follows. Dioxygenase that cleaves the interphenyl C-alpha-C-beta double bond of resveratrol to yield 3,5-dihydroxybenzaldehyde and 4-hydroxybenzaldehyde. Also cleaves piceatannol, a compound that differs from resveratrol only in the occurrence of an additional hydroxyl group, which leads to the production of 3,4-dihydroxybenzaldehyde and 3,5-hydroxybenzaldehyde. In Botryotinia fuckeliana (strain B05.10) (Noble rot fungus), this protein is Resveratrol cleavage oxygenase 1.